The chain runs to 276 residues: MALKKVLTIAGSDTSAGAGMQADLKTFQELDVYGMVALTSIVTMDKETWSHDVTPIDMNIFEKQLETAISIGPNAIKTGMLGTQDIIKRAGDVFVESGADYFVVDPVMVCKGEDEVLNPGNTEAMIQYLLPKATVVTPNLFEAGQLSGLGKLTSIEDMKKAAQVIYDKGTPHVIIKGGKALDQDKSYDLYYDGQQFYQLTTDMFQQSYNHGAGCTFAAATTAYLANGKSPKEAIIAAKAFVASAIKNGWKMNDFVGPVDHGAYNRIEQINVEVTEV.

Asparagine 139 serves as a coordination point for ATP. Glutamate 142 contacts Mg(2+). ATP contacts are provided by residues 176 to 180, aspartate 188, glycine 213, and lysine 238; that span reads KGGKA.

This sequence belongs to the ThiD family.

The enzyme catalyses pyridoxal + ATP = pyridoxal 5'-phosphate + ADP + H(+). Functionally, phosphorylates B6 vitamers; functions in a salvage pathway. Uses pyridoxal, pyridoxine, and pyridoxamine as substrates. This is Putative pyridoxine kinase (pdxK) from Staphylococcus epidermidis (strain ATCC 35984 / DSM 28319 / BCRC 17069 / CCUG 31568 / BM 3577 / RP62A).